The following is a 500-amino-acid chain: Glycerol kinase (500 aa).

Threonine 16 contributes to the ADP binding site. ATP contacts are provided by threonine 16 and threonine 17. A sn-glycerol 3-phosphate-binding site is contributed by threonine 16. Arginine 20 lines the ADP pocket. 4 residues coordinate sn-glycerol 3-phosphate: arginine 86, glutamate 87, tyrosine 138, and aspartate 247. The glycerol site is built by arginine 86, glutamate 87, tyrosine 138, aspartate 247, and glutamine 248. The ADP site is built by threonine 269 and glycine 312. Positions 269, 312, 316, and 413 each coordinate ATP. ADP contacts are provided by glycine 413 and asparagine 417.

It belongs to the FGGY kinase family.

It carries out the reaction glycerol + ATP = sn-glycerol 3-phosphate + ADP + H(+). It functions in the pathway polyol metabolism; glycerol degradation via glycerol kinase pathway; sn-glycerol 3-phosphate from glycerol: step 1/1. Inhibited by fructose 1,6-bisphosphate (FBP). Key enzyme in the regulation of glycerol uptake and metabolism. Catalyzes the phosphorylation of glycerol to yield sn-glycerol 3-phosphate. The protein is Glycerol kinase of Rippkaea orientalis (strain PCC 8801 / RF-1) (Cyanothece sp. (strain PCC 8801)).